The chain runs to 391 residues: Acetylgalactosaminyl-O-glycosyl-glycoprotein beta-1,3-N-acetylglucosaminyltransferase (391 aa).

The Cytoplasmic portion of the chain corresponds to 1–11 (MALPSSRRFKS). The helical; Signal-anchor for type II membrane protein transmembrane segment at 12 to 32 (PTTLAFFLVGVTLVVLNQWFL) threads the bilayer. Residues 33–391 (QEHRQEKAKG…TAGEQNPDAH (359 aa)) are Lumenal-facing. 2 N-linked (GlcNAc...) asparagine glycosylation sites follow: Asn-68 and Asn-191.

It belongs to the glycosyltransferase 31 family.

The protein resides in the golgi apparatus membrane. The enzyme catalyses a 3-O-[N-acetyl-alpha-D-galactosaminyl]-L-threonyl-[protein] + UDP-N-acetyl-alpha-D-glucosamine = a 3-O-[N-acetyl-beta-D-glucosaminyl-(1-&gt;3)-N-acetyl-alpha-D-galactosaminyl]-L-threonyl-[protein] + UDP + H(+). It carries out the reaction a 3-O-[N-acetyl-alpha-D-galactosaminyl]-L-seryl-[protein] + UDP-N-acetyl-alpha-D-glucosamine = 3-O-[N-acetyl-beta-D-glucosaminyl-(1-&gt;3)-N-acetyl-alpha-D-galactosaminyl]-L-seryl-[protein] + UDP + H(+). It participates in protein modification; protein glycosylation. Beta-1,3-N-acetylglucosaminyltransferase that synthesizes the core 3 structure of the O-glycan, an important precursor in the biosynthesis of mucin-type glycoproteins. Plays an important role in the synthesis of mucin-type O-glycans in digestive organs. In Mus musculus (Mouse), this protein is Acetylgalactosaminyl-O-glycosyl-glycoprotein beta-1,3-N-acetylglucosaminyltransferase (B3gnt6).